We begin with the raw amino-acid sequence, 323 residues long: HPr kinase/phosphorylase (323 aa).

Catalysis depends on residues H146 and K167. 161–168 (GESGLGKS) serves as a coordination point for ATP. Residue S168 coordinates Mg(2+). D185 acts as the Proton acceptor; for phosphorylation activity. Proton donor; for dephosphorylation activity in catalysis. Positions 209 to 218 (LEVRGLGLLD) are important for the catalytic mechanism of both phosphorylation and dephosphorylation. E210 is a Mg(2+) binding site. Residue R250 is part of the active site. The tract at residues 271–276 (QVAAGR) is important for the catalytic mechanism of dephosphorylation.

This sequence belongs to the HPrK/P family. As to quaternary structure, homohexamer. Mg(2+) serves as cofactor.

It carries out the reaction [HPr protein]-L-serine + ATP = [HPr protein]-O-phospho-L-serine + ADP + H(+). The enzyme catalyses [HPr protein]-O-phospho-L-serine + phosphate + H(+) = [HPr protein]-L-serine + diphosphate. In terms of biological role, catalyzes the ATP- as well as the pyrophosphate-dependent phosphorylation of a specific serine residue in HPr, a phosphocarrier protein of the phosphoenolpyruvate-dependent sugar phosphotransferase system (PTS). HprK/P also catalyzes the pyrophosphate-producing, inorganic phosphate-dependent dephosphorylation (phosphorolysis) of seryl-phosphorylated HPr (P-Ser-HPr). The protein is HPr kinase/phosphorylase of Cupriavidus pinatubonensis (strain JMP 134 / LMG 1197) (Cupriavidus necator (strain JMP 134)).